Reading from the N-terminus, the 139-residue chain is Aspartate 1-decarboxylase (139 aa).

Serine 25 functions as the Schiff-base intermediate with substrate; via pyruvic acid in the catalytic mechanism. A Pyruvic acid (Ser) modification is found at serine 25. Threonine 57 is a binding site for substrate. Catalysis depends on tyrosine 58, which acts as the Proton donor. Glycine 73–alanine 75 provides a ligand contact to substrate. Residues glutamate 116–glutamate 139 form a disordered region.

The protein belongs to the PanD family. In terms of assembly, heterooctamer of four alpha and four beta subunits. Pyruvate is required as a cofactor. Post-translationally, is synthesized initially as an inactive proenzyme, which is activated by self-cleavage at a specific serine bond to produce a beta-subunit with a hydroxyl group at its C-terminus and an alpha-subunit with a pyruvoyl group at its N-terminus.

Its subcellular location is the cytoplasm. It catalyses the reaction L-aspartate + H(+) = beta-alanine + CO2. Its pathway is cofactor biosynthesis; (R)-pantothenate biosynthesis; beta-alanine from L-aspartate: step 1/1. Its function is as follows. Catalyzes the pyruvoyl-dependent decarboxylation of aspartate to produce beta-alanine. This Corynebacterium urealyticum (strain ATCC 43042 / DSM 7109) protein is Aspartate 1-decarboxylase.